Consider the following 132-residue polypeptide: uncharacterized protein (132 aa).

A signal peptide spans 1-18 (MRKIISMLFIPLFIFAMA).

This is an uncharacterized protein from Aquifex aeolicus (strain VF5).